Consider the following 51-residue polypeptide: UPF0391 membrane protein Mbur_2216 (51 aa).

The next 2 helical transmembrane spans lie at 1 to 21 and 31 to 51; these read MADLIGLAIVFLIFALVAYVL and MTIAKWLVIIFIVLAIITILL.

It belongs to the UPF0391 family.

The protein localises to the cell membrane. In Methanococcoides burtonii (strain DSM 6242 / NBRC 107633 / OCM 468 / ACE-M), this protein is UPF0391 membrane protein Mbur_2216.